The chain runs to 360 residues: Photosystem II protein D1 (360 aa).

The next 3 helical transmembrane spans lie at 29–46 (YIGW…TAAS), 118–133 (HFLI…EWEL), and 142–156 (WIFV…AASA). Histidine 118 is a binding site for chlorophyll a. Tryptophan 126 is a pheophytin a binding site. Positions 170 and 189 each coordinate [CaMn4O5] cluster. The chain crosses the membrane as a helical span at residues 197–218 (FHMAGVAGVFGGSLFSAMHGSL). Residue histidine 198 participates in chlorophyll a binding. A quinone is bound by residues histidine 215 and 264–265 (SF). Histidine 215 provides a ligand contact to Fe cation. Histidine 272 contacts Fe cation. A helical transmembrane segment spans residues 274 to 288 (FLAAWPVVGIWLTAL). [CaMn4O5] cluster contacts are provided by histidine 332, glutamate 333, aspartate 342, and alanine 344. Positions 345-360 (SNEILPVAISAPSVVG) are excised as a propeptide.

It belongs to the reaction center PufL/M/PsbA/D family. As to quaternary structure, PSII is composed of 1 copy each of membrane proteins PsbA, PsbB, PsbC, PsbD, PsbE, PsbF, PsbH, PsbI, PsbJ, PsbK, PsbL, PsbM, PsbT, PsbX, PsbY, PsbZ, Psb30/Ycf12, at least 3 peripheral proteins of the oxygen-evolving complex and a large number of cofactors. It forms dimeric complexes. The cofactor is The D1/D2 heterodimer binds P680, chlorophylls that are the primary electron donor of PSII, and subsequent electron acceptors. It shares a non-heme iron and each subunit binds pheophytin, quinone, additional chlorophylls, carotenoids and lipids. D1 provides most of the ligands for the Mn4-Ca-O5 cluster of the oxygen-evolving complex (OEC). There is also a Cl(-1) ion associated with D1 and D2, which is required for oxygen evolution. The PSII complex binds additional chlorophylls, carotenoids and specific lipids.. Tyr-161 forms a radical intermediate that is referred to as redox-active TyrZ, YZ or Y-Z. In terms of processing, C-terminally processed by CTPA; processing is essential to allow assembly of the oxygen-evolving complex and thus photosynthetic growth.

The protein localises to the plastid. It localises to the chloroplast thylakoid membrane. It catalyses the reaction 2 a plastoquinone + 4 hnu + 2 H2O = 2 a plastoquinol + O2. In terms of biological role, photosystem II (PSII) is a light-driven water:plastoquinone oxidoreductase that uses light energy to abstract electrons from H(2)O, generating O(2) and a proton gradient subsequently used for ATP formation. It consists of a core antenna complex that captures photons, and an electron transfer chain that converts photonic excitation into a charge separation. The D1/D2 (PsbA/PsbD) reaction center heterodimer binds P680, the primary electron donor of PSII as well as several subsequent electron acceptors. The protein is Photosystem II protein D1 of Ectocarpus siliculosus (Brown alga).